Reading from the N-terminus, the 334-residue chain is Putative lysine N-acyltransferase C17G9.06c (334 aa).

His-248 lines the substrate pocket. Glu-286 acts as the Proton acceptor in catalysis.

The protein belongs to the lysine N-acyltransferase mbtK family.

It is found in the cytoplasm. The protein resides in the nucleus. This Schizosaccharomyces pombe (strain 972 / ATCC 24843) (Fission yeast) protein is Putative lysine N-acyltransferase C17G9.06c.